A 321-amino-acid polypeptide reads, in one-letter code: Putrescine export system permease protein SapB (321 aa).

Residues 1 to 8 (MIIFTLRR) lie on the Cytoplasmic side of the membrane. The chain crosses the membrane as a helical span at residues 9–29 (ILLLIVTLFLLTFVGFSLSYF). At 30 to 80 (TPHAPLQGASLWNAWVFWFNGLIHWDFGVSSINGQPIAEQLKEVFPATMEL) the chain is on the periplasmic side. The ABC transmembrane type-1 domain maps to 74 to 302 (FPATMELCIL…SLVIIVNVIS (229 aa)). Residues 81-101 (CILAFGFALIVGIPVGMIAGI) form a helical membrane-spanning segment. Residues 102-112 (TRHKWQDNLIN) are Cytoplasmic-facing. A helical membrane pass occupies residues 113 to 133 (AIALLGFSIPVFWLALLLTLF). At 134–174 (CSLTLGWLPVSGRFDLLYEVKPITGFALIDAWLSDSPWRDE) the chain is on the periplasmic side. Residues 175–195 (MIMSAIRHMILPVITLSVAPT) form a helical membrane-spanning segment. At 196-248 (TEVIRLMRISTIEVYDQNYVKAAATRGLSRFTILRRHVLHNALPPVIPRLGLQ) the chain is on the cytoplasmic side. Residues 249–269 (FSTMLTLAMITEMVFSWPGLG) traverse the membrane as a helical segment. Over 270–280 (RWLINAIRQQD) the chain is Periplasmic. Residues 281 to 301 (YAAISAGVMVCGSLVIIVNVI) form a helical membrane-spanning segment. Residues 302–321 (SDILGAMANPLKHKEWYALR) are Cytoplasmic-facing.

It belongs to the binding-protein-dependent transport system permease family. OppBC subfamily.

Its subcellular location is the cell inner membrane. Functionally, part of a putrescine export transport system, does not play a role in resistance to antimicrobial peptides. In Escherichia coli (strain K12), this protein is Putrescine export system permease protein SapB (sapB).